A 367-amino-acid polypeptide reads, in one-letter code: Heparan sulfate glucosamine 3-O-sulfotransferase 2 (367 aa).

The Cytoplasmic segment spans residues 1–19 (MAYRVLGRAGPPQPRRARR). Residues 20 to 39 (LLFAFTLSLSCTYLCYSFLC) traverse the membrane as a helical; Signal-anchor for type II membrane protein segment. Residues 40–367 (CCDGLGQSRL…ETVGQDFRWE (328 aa)) are Lumenal-facing. The interval 66–115 (LLAKSRPCDPPGPTPSEPSAPSAPAAAAPAPRLSGSNHSGSPKPGTKRLP) is disordered. Positions 73–83 (CDPPGPTPSEP) are enriched in pro residues. Positions 84–96 (SAPSAPAAAAPAP) are enriched in low complexity. Asn102 carries N-linked (GlcNAc...) asparagine glycosylation. 124 to 128 (KGGTR) contacts 3'-phosphoadenylyl sulfate. Substrate is bound by residues 146–152 (EPHFFDR) and 177–180 (KTPS). The N-linked (GlcNAc...) asparagine glycan is linked to Asn193. 3'-phosphoadenylyl sulfate is bound by residues Arg205 and Ser213. Asn235 carries N-linked (GlcNAc...) asparagine glycosylation. 245-246 (WN) contributes to the substrate binding site. Asn306 is a glycosylation site (N-linked (GlcNAc...) asparagine). The cysteines at positions 313 and 325 are disulfide-linked. 330–334 (KGRTH) contributes to the 3'-phosphoadenylyl sulfate binding site.

It belongs to the sulfotransferase 1 family.

It is found in the golgi apparatus membrane. The catalysed reaction is alpha-D-glucosaminyl-[heparan sulfate](n) + 3'-phosphoadenylyl sulfate = 3-sulfo-alpha-D-glucosaminyl-[heparan sulfate](n) + adenosine 3',5'-bisphosphate + H(+). In terms of biological role, sulfotransferase that utilizes 3'-phospho-5'-adenylyl sulfate (PAPS) to catalyze the transfer of a sulfo group to an N-unsubstituted glucosamine linked to a 2-O-sulfo iduronic acid unit on heparan sulfate. Catalyzes the O-sulfation of glucosamine in GlcA2S-GlcNS. Unlike HS3ST1/3-OST-1, does not convert non-anticoagulant heparan sulfate to anticoagulant heparan sulfate. The protein is Heparan sulfate glucosamine 3-O-sulfotransferase 2 (Hs3st2) of Mus musculus (Mouse).